The chain runs to 434 residues: Zinc finger CCCH domain-containing protein 10 (434 aa).

Residues M1 to S37 are disordered. The span at G12–G35 shows a compositional bias: gly residues. C3H1-type zinc fingers lie at residues A36–M63, K73–K99, and K134–R161. R185 and R186 each carry omega-N-methylarginine. A compositionally biased stretch (basic and acidic residues) spans P196–P207. A disordered region spans residues P196–P217. The stretch at G234–K280 forms a coiled coil. The span at T314–E330 shows a compositional bias: polar residues. Residues T314–I362 form a disordered region. Positions A339–L358 are enriched in pro residues.

The protein localises to the nucleus. In terms of biological role, specific regulator of miRNA biogenesis. Binds, via the C3H1-type zinc finger domains, to the binding motif 5'-GCAGCGC-3' on microRNA pri-MIR143 and negatively regulates the processing to mature microRNA. The sequence is that of Zinc finger CCCH domain-containing protein 10 (ZC3H10) from Homo sapiens (Human).